The chain runs to 369 residues: Protein RIC-3 (369 aa).

The N-terminal stretch at 1–28 is a signal peptide; the sequence is MAYSTVQRVALASGLVLALSLLLPKAFL. Over 29 to 95 the chain is Lumenal; that stretch reads SRGKRQEPPP…AGGGGSGRGL (67 aa). Residues 30-67 are disordered; it reads RGKRQEPPPTPEGKLGRFPPMMHHHQAPSDGQTPGARF. Residues 96–116 form a helical membrane-spanning segment; sequence MGQIIPIYGFGIFLYILYILF. Residues 117–369 lie on the Cytoplasmic side of the membrane; that stretch reads KLSKGKTTAE…LRKRNPQGLE (253 aa). The stretch at 140-169 forms a coiled coil; the sequence is RKITSFELAQLQEKLKETEAAMEKLINRVG. N6-acetyllysine; alternate is present on Lys-202. Lys-202 participates in a covalent cross-link: Glycyl lysine isopeptide (Lys-Gly) (interchain with G-Cter in ubiquitin); alternate. Disordered stretches follow at residues 272-295 and 316-369; these read ESDHLGWESLPTDPRAQEDNSVTS and LAEN…QGLE. Residues 332 to 346 are compositionally biased toward basic and acidic residues; it reads ETTKEEWSQDFKDEG. A compositionally biased stretch (basic residues) spans 360-369; the sequence is LRKRNPQGLE.

Belongs to the ric-3 family. As to quaternary structure, monomer and homodimer. Interacts with CHRNA7, CHRNA3, CHRNA4, CHRNB2, CHRNB4 and HTR3A. As to expression, broadly expressed, with high levels in muscle, brain, heart, pancreas and testis. In the central nervous system, highest levels are detected in the cerebellum and pituitary gland. Over-expressed in brains from patients with bipolar disease or schizophrenia. Isoform 5 is predominantly expressed in the brain.

Its subcellular location is the endoplasmic reticulum membrane. The protein resides in the golgi apparatus membrane. In terms of biological role, molecular chaperone which facilitates proper subunit assembly and surface trafficking of alpha-7 (CHRNA7) and alpha-8 (CHRNA8) nicotinic acetylcholine receptors. May also promote functional expression of homomeric serotoninergic 5-HT3 receptors, and of heteromeric acetylcholine receptors alpha-3/beta-2, alpha-3/beta-4, alpha-4/beta-2 and alpha-4/beta-4. In Homo sapiens (Human), this protein is Protein RIC-3 (RIC3).